The following is a 382-amino-acid chain: Mannitol-1-phosphate 5-dehydrogenase (382 aa).

4–15 (AVHFGAGNIGRG) serves as a coordination point for NAD(+).

It belongs to the mannitol dehydrogenase family.

It catalyses the reaction D-mannitol 1-phosphate + NAD(+) = beta-D-fructose 6-phosphate + NADH + H(+). This is Mannitol-1-phosphate 5-dehydrogenase from Vibrio campbellii (strain ATCC BAA-1116).